A 282-amino-acid polypeptide reads, in one-letter code: AB hydrolase superfamily protein FGSG_00045 (282 aa).

Residues methionine 1–serine 10 are compositionally biased toward polar residues. The interval methionine 1 to threonine 22 is disordered. Residues threonine 22–isoleucine 270 form the AB hydrolase-1 domain.

This sequence belongs to the AB hydrolase superfamily.

It functions in the pathway mycotoxin biosynthesis. AB hydrolase superfamily protein; part of the gene cluster that mediates the biosynthesis of gramillins A and B, bicyclic lipopeptides that induce cell death in maize leaves but not in wheat leaves. The nonribosomal peptide synthetase GRA1 incorporates respectively a glutamic adic (Glu), a leucine (Leu), a serine (Ser), a hydroxyglutamine (HOGln), a 2-amino decanoic acid, and 2 cysteins (CysB and CysA). The biosynthesis of 2-amino decanoic acid incorporated in gramillins could be initiated by a fatty acid synthase composed of the alpha and beta subunits FGSG_00036 and FGSG_11656. The cytochrome P450 monooxygenase FGSG_15680 could hydroxylate the fatty acid chain. Subsequent oxidation to the ketone by the oxidoreductase FGSG_00048 and transamination by aminotransferase FGSG_00049 could form 2-amino-decanoic acid. On the other hand, FGSG_15680 could also be responsible for the HO-modified glutamine at the gamma-position. Whether hydroxylation occurs on the fully assembled product or on the Gln residue prior to assembly into the gramillins requires further proof. The thioredoxin FGSG_00043 could also be required for the disulfide-bond formation between CysA and CysB. The specific involvement of the remaining proteins from the cluster is more difficult to discern, but could have broader regulatory (FGSG_00040 and FGSG_11657) or enzymatic functions (FGSG_00044 and FGSG_00045). The final C-domain of GRA1 does not possess the expected sequence of a termination CT domain, often implicated in macrocyclization and release of a cyclopeptidein fungal NRPs; and the thioesterase FGSG_00047 may act in concert with the terminal C-domain of GRA1 to catalyze the formation of the macrocyclic anhydride and release of the products. This Gibberella zeae (strain ATCC MYA-4620 / CBS 123657 / FGSC 9075 / NRRL 31084 / PH-1) (Wheat head blight fungus) protein is AB hydrolase superfamily protein FGSG_00045.